We begin with the raw amino-acid sequence, 376 residues long: Alanine racemase 1 (376 aa).

Residue lysine 40 is the Proton acceptor; specific for D-alanine of the active site. Position 40 is an N6-(pyridoxal phosphate)lysine (lysine 40). Arginine 138 is a binding site for substrate. Tyrosine 268 serves as the catalytic Proton acceptor; specific for L-alanine. Residue methionine 316 coordinates substrate.

This sequence belongs to the alanine racemase family. The cofactor is pyridoxal 5'-phosphate.

The catalysed reaction is L-alanine = D-alanine. It participates in amino-acid biosynthesis; D-alanine biosynthesis; D-alanine from L-alanine: step 1/1. Functionally, catalyzes the interconversion of L-alanine and D-alanine. May also act on other amino acids. This chain is Alanine racemase 1 (alr1), found in Oceanobacillus iheyensis (strain DSM 14371 / CIP 107618 / JCM 11309 / KCTC 3954 / HTE831).